The chain runs to 118 residues: Small ribosomal subunit protein bS6 (118 aa).

Belongs to the bacterial ribosomal protein bS6 family.

Its function is as follows. Binds together with bS18 to 16S ribosomal RNA. This is Small ribosomal subunit protein bS6 from Saccharopolyspora erythraea (strain ATCC 11635 / DSM 40517 / JCM 4748 / NBRC 13426 / NCIMB 8594 / NRRL 2338).